A 732-amino-acid polypeptide reads, in one-letter code: DNA ligase (732 aa).

Residues 47–51 (DAEYD), 96–97 (SI), and glutamate 133 contribute to the NAD(+) site. The active-site N6-AMP-lysine intermediate is the lysine 135. 4 residues coordinate NAD(+): arginine 156, glutamate 196, lysine 317, and lysine 341. Cysteine 470, cysteine 473, cysteine 488, and cysteine 494 together coordinate Zn(2+). Residues 653–732 (RATLPLAGKT…AGMLALLQGR (80 aa)) enclose the BRCT domain.

Belongs to the NAD-dependent DNA ligase family. LigA subfamily. It depends on Mg(2+) as a cofactor. Mn(2+) serves as cofactor.

The catalysed reaction is NAD(+) + (deoxyribonucleotide)n-3'-hydroxyl + 5'-phospho-(deoxyribonucleotide)m = (deoxyribonucleotide)n+m + AMP + beta-nicotinamide D-nucleotide.. DNA ligase that catalyzes the formation of phosphodiester linkages between 5'-phosphoryl and 3'-hydroxyl groups in double-stranded DNA using NAD as a coenzyme and as the energy source for the reaction. It is essential for DNA replication and repair of damaged DNA. This chain is DNA ligase, found in Paracidovorax citrulli (strain AAC00-1) (Acidovorax citrulli).